The sequence spans 93 residues: Putative hemolysin E-like protein (93 aa).

Belongs to the hemolysin E family.

The polypeptide is Putative hemolysin E-like protein (Escherichia coli O6:H1 (strain CFT073 / ATCC 700928 / UPEC)).